Consider the following 490-residue polypeptide: Probable glycine dehydrogenase (decarboxylating) subunit 2 (490 aa).

Lys-273 is subject to N6-(pyridoxal phosphate)lysine.

It belongs to the GcvP family. C-terminal subunit subfamily. The glycine cleavage system is composed of four proteins: P, T, L and H. In this organism, the P 'protein' is a heterodimer of two subunits. The cofactor is pyridoxal 5'-phosphate.

The enzyme catalyses N(6)-[(R)-lipoyl]-L-lysyl-[glycine-cleavage complex H protein] + glycine + H(+) = N(6)-[(R)-S(8)-aminomethyldihydrolipoyl]-L-lysyl-[glycine-cleavage complex H protein] + CO2. Its function is as follows. The glycine cleavage system catalyzes the degradation of glycine. The P protein binds the alpha-amino group of glycine through its pyridoxal phosphate cofactor; CO(2) is released and the remaining methylamine moiety is then transferred to the lipoamide cofactor of the H protein. The protein is Probable glycine dehydrogenase (decarboxylating) subunit 2 of Staphylococcus aureus (strain bovine RF122 / ET3-1).